A 50-amino-acid polypeptide reads, in one-letter code: Large ribosomal subunit protein bL33 (50 aa).

The protein belongs to the bacterial ribosomal protein bL33 family.

This is Large ribosomal subunit protein bL33 from Koribacter versatilis (strain Ellin345).